A 305-amino-acid polypeptide reads, in one-letter code: Olfactory receptor 4F17 (305 aa).

Over 1 to 18 (MVTEFIFLGLSDSQGLQT) the chain is Extracellular. The helical transmembrane segment at 19-42 (FLFMLFFVFYGGIVFGNLLIVITV) threads the bilayer. The Cytoplasmic portion of the chain corresponds to 43–50 (VSDSHLHS). A helical transmembrane segment spans residues 51-72 (PMYFLLANLSLIDLSLSSVTAP). At 73 to 93 (KMITDFFSQRKVISFKGCLVQ) the chain is on the extracellular side. The cysteines at positions 90 and 182 are disulfide-linked. A helical membrane pass occupies residues 94-113 (IFLLHFFGGSEMVILIAMGF). Residues 114–132 (DRYIAICKPLHYTTIMCGN) lie on the Cytoplasmic side of the membrane. A helical transmembrane segment spans residues 133–151 (ACVGIMAVAWGIGFLHSVS). Residues 152 to 188 (QLAFAVHLPFCGPNEVDSFYCDLPRVIKLACTDTYRL) are Extracellular-facing. A helical transmembrane segment spans residues 189 to 212 (DIMVIANSGVLTVCSFVLLIISYT). At 213–228 (IILMTIQHRPLDKSSK) the chain is on the cytoplasmic side. The helical transmembrane segment at 229–251 (ALSTLTAHITVVLLFFGPCVFIY) threads the bilayer. At 252–262 (AWPFPIKSLDK) the chain is on the extracellular side. A helical membrane pass occupies residues 263 to 282 (FLAVFYSVITPLLNPIIYTL). Residues 283–305 (RNKDMKTAIRQLRKWDAHSSVKF) are Cytoplasmic-facing.

It belongs to the G-protein coupled receptor 1 family.

Its subcellular location is the cell membrane. Its function is as follows. Odorant receptor. The sequence is that of Olfactory receptor 4F17 (OR4F17) from Homo sapiens (Human).